Consider the following 218-residue polypeptide: Ras-related protein Rab-11B (218 aa).

Glycine 2 is modified (N-acetylglycine). Citrulline is present on arginine 4. GTP is bound by residues serine 20, glycine 21, glycine 23, lysine 24, serine 25, asparagine 26, asparagine 37, leucine 38, serine 40, serine 42, and threonine 43. Residue serine 25 coordinates Mg(2+). Residues 36-47 carry the Switch 1 motif; it reads FNLESKSTIGVE. Threonine 43 and aspartate 66 together coordinate Mg(2+). The short motif at 67–86 is the Switch 2 element; that stretch reads TAGQERYRAITSAYYRGAVG. GTP is bound by residues glycine 69, asparagine 124, lysine 125, aspartate 127, alanine 155, and leucine 156. The disordered stretch occupies residues 184-218; that stretch reads RAAHDESPGNNVVDISVPPTTDGQKPNKLQCCQNL. S-geranylgeranyl cysteine attachment occurs at residues cysteine 214 and cysteine 215. At cysteine 215 the chain carries Cysteine methyl ester. Positions 216 to 218 are cleaved as a propeptide — removed in mature form; the sequence is QNL.

The protein belongs to the small GTPase superfamily. Rab family. In terms of assembly, interacts with KCNMA1. Interacts with RAB11FIP1, RAB11FIP2, RAB11FIP3 and RAB11FIP4. May interact with TBC1D14. Interacts with ATP6V1E1. Interacts with PI4KB. Interacts (GDP-bound form) with ZFYVE27. Interacts (GDP-bound form) with KIF5A in a ZFYVE27-dependent manner. Interacts with RELCH. Interacts (in GTP-bound form) with TBC1D8B (via domain Rab-GAP TBC). Forms a complex containing RAB11B, ASAP1, Rabin8/RAB3IP, RAP11FIP3 and ARF4. Interacts with WDR44. Mg(2+) is required as a cofactor. Post-translationally, citrullinated by PADI4. (Microbial infection) Glycosylated on arginine residues by S.typhimurium protein Ssek3.

The protein localises to the recycling endosome membrane. Its subcellular location is the cytoplasmic vesicle. The protein resides in the secretory vesicle. It is found in the synaptic vesicle membrane. It localises to the phagosome membrane. The enzyme catalyses GTP + H2O = GDP + phosphate + H(+). Its activity is regulated as follows. Regulated by guanine nucleotide exchange factors (GEFs) which promote the exchange of bound GDP for free GTP. Regulated by GTPase activating proteins (GAPs) which increase the GTP hydrolysis activity. Inhibited by GDP dissociation inhibitors (GDIs) which prevent Rab-GDP dissociation. The small GTPases Rab are key regulators of intracellular membrane trafficking, from the formation of transport vesicles to their fusion with membranes. Rabs cycle between an inactive GDP-bound form and an active GTP-bound form that is able to recruit to membranes different set of downstream effectors directly responsible for vesicle formation, movement, tethering and fusion. The small Rab GTPase RAB11B plays a role in endocytic recycling, regulating apical recycling of several transmembrane proteins including cystic fibrosis transmembrane conductance regulator/CFTR, epithelial sodium channel/ENaC, potassium voltage-gated channel, and voltage-dependent L-type calcium channel. May also regulate constitutive and regulated secretion, like insulin granule exocytosis. Required for melanosome transport and release from melanocytes. Also regulates V-ATPase intracellular transport in response to extracellular acidosis. Promotes Rabin8/RAB3IP preciliary vesicular trafficking to mother centriole by forming a ciliary targeting complex containing Rab11, ASAP1, Rabin8/RAB3IP, RAB11FIP3 and ARF4, thereby regulating ciliogenesis initiation. On the contrary, upon LPAR1 receptor signaling pathway activation, interaction with phosphorylated WDR44 prevents Rab11-RAB3IP-RAB11FIP3 complex formation and cilia growth. The protein is Ras-related protein Rab-11B of Homo sapiens (Human).